Reading from the N-terminus, the 314-residue chain is Vomeronasal type-1 receptor 95 (314 aa).

Over 1 to 18 (MNKDNTLYCSAYRIAFFS) the chain is Extracellular. Residues 19–39 (EIGIGISANSCLLLFHTFMFI) traverse the membrane as a helical segment. The Cytoplasmic segment spans residues 40–48 (RGHRPRLTD). Residues 49–69 (LPIGLVALIHLVMLLLAAYIT) traverse the membrane as a helical segment. The Extracellular segment spans residues 70–88 (EDFFMSSGGWDDITCKLFI). A disulfide bridge connects residues Cys84 and Cys171. The helical transmembrane segment at 89 to 113 (FLHRFFRSLSVCDTCMLSVFQAIIL) threads the bilayer. Over 114–133 (CPQSSHLAKFKLNSPHHLSC) the chain is Cytoplasmic. A helical membrane pass occupies residues 134 to 154 (FFIFMSIFYTSISSHILIAAI). Over 155 to 186 (ATQNLTSVNLIYITKSCSFLPMSSSMQRTFST) the chain is Extracellular. Asn158 is a glycosylation site (N-linked (GlcNAc...) asparagine). The chain crosses the membrane as a helical span at residues 187–207 (LLAFRNVFLIGLMGLSTCYMA). Topologically, residues 208 to 235 (TLLCRHKTRSQQLQNSKLSPKATPEQRA) are cytoplasmic. Residues 236–256 (IWTILMLMSFFLIISTFDSIM) form a helical membrane-spanning segment. The Extracellular portion of the chain corresponds to 257–268 (TYSRTIFQGNQS). N-linked (GlcNAc...) asparagine glycosylation occurs at Asn266. The helical transmembrane segment at 269–289 (LYCVQIPVAHGYAAFSPLLVL) threads the bilayer. Residues 290–314 (NNEKRLTSLMISMYDRIVRLESLCS) lie on the Cytoplasmic side of the membrane.

The protein belongs to the G-protein coupled receptor 1 family.

The protein resides in the cell membrane. Functionally, putative pheromone receptor implicated in the regulation of social as well as reproductive behavior. This Rattus norvegicus (Rat) protein is Vomeronasal type-1 receptor 95 (Vom1r95).